A 1254-amino-acid chain; its full sequence is Juxtamembrane domain-associated catenin (1254 aa).

Disordered stretches follow at residues Met-1–Lys-38, Ala-84–Pro-106, and Pro-145–Gly-209. The span at Pro-12 to Gly-22 shows a compositional bias: acidic residues. Residues Pro-145–Pro-157 are compositionally biased toward polar residues. 4 Fibronectin type-III domains span residues Ala-207 to Ser-302, Ala-315 to Ala-411, Pro-428 to Thr-518, and Ile-530 to Ser-624. The interval Ala-412 to Gln-433 is disordered. Positions Met-662–Asn-685 are disordered. 5 ARM repeats span residues Gly-733–Glu-775, Asp-777–Thr-820, Asn-874–Ala-922, His-969–Val-1012, and Lys-1016–Leu-1058. The tract at residues Asp-920–Thr-960 is disordered. Residues Gly-1159–Val-1254 are disordered. Over residues Ser-1166 to Gln-1176 the composition is skewed to polar residues. Positions Gly-1177–Asp-1187 are enriched in basic and acidic residues.

It belongs to the beta-catenin family. As to quaternary structure, associated with the catenin-cadherin complex consisting of hmr-1, hmp-1 and hmp-2. Interacts with hmr-1. Interacts with picc-1. As to expression, epidermal cells.

The protein localises to the cell junction. Its subcellular location is the adherens junction. It is found in the nucleus. May act as a positive modulator of hmr-1 function during epidermal morphogenesis. Required for proper localization of other junctional components, such as pac-1. The polypeptide is Juxtamembrane domain-associated catenin (jac-1) (Caenorhabditis elegans).